The primary structure comprises 81 residues: Protein GPR15LG (81 aa).

The signal sequence occupies residues 1–24; that stretch reads MRFLALTSLLCILLLCLSFFSAEG. 2 disulfide bridges follow: C40–C63 and C41–C60.

Interacts with SUSD2; the interaction is direct.

Its subcellular location is the secreted. Functionally, highly cationic protein that has multiple functions. Acts as a chemotactic factor that mediates lymphocytes recruitment to epithelia through binding and activation of the G-protein coupled receptor GPR15. May be a tumor suppressor; together with SUSD2 has a growth inhibitory effect on colon cancer cells which includes G1 cell cycle arrest. May regulate keratinocyte proliferation. In addition, through activation of Mas-related G protein-coupled receptors (MRGPRs) contributes to pruritogenesis by activating itch-selective sensory neurons and mast cells degranulation. In terms of biological role, has antimicrobial activity against Gram-positive bacteria, including Staphylococcus aureus and Actinomyces spec., and Mycoplasma hominis and lentivirus. The protein is Protein GPR15LG (GPR15LG) of Sus scrofa (Pig).